The sequence spans 198 residues: 8-oxoguanine DNA glycosylase/AP lyase (198 aa).

Catalysis depends on residues Lys-122 and Asp-140.

This sequence belongs to the type-2 OGG1 family. Monomer.

The catalysed reaction is 2'-deoxyribonucleotide-(2'-deoxyribose 5'-phosphate)-2'-deoxyribonucleotide-DNA = a 3'-end 2'-deoxyribonucleotide-(2,3-dehydro-2,3-deoxyribose 5'-phosphate)-DNA + a 5'-end 5'-phospho-2'-deoxyribonucleoside-DNA + H(+). Catalyzes the excision of an oxidatively damaged form of guanine (7,8-dihydro-8-oxoguanine = 8-oxoG) from DNA. Also cleaves the DNA backbone at apurinic/apyrimidinic sites (AP sites). Efficiently cleaves oligomers containing 8-oxoG:C and 8-oxoG:G base pairs, and is less effective on oligomers containing 8-oxoG:T and 8-oxoG:A mispairs. This chain is 8-oxoguanine DNA glycosylase/AP lyase, found in Archaeoglobus fulgidus (strain ATCC 49558 / DSM 4304 / JCM 9628 / NBRC 100126 / VC-16).